A 541-amino-acid chain; its full sequence is FAD-linked oxidoreductase pynB (541 aa).

Residues Met1 to Ala20 form the signal peptide. Residues Asn30, Asn57, Asn117, Asn131, Asn158, Asn253, Asn306, Asn343, Asn430, and Asn461 are each glycosylated (N-linked (GlcNAc...) asparagine). The FAD-binding PCMH-type domain occupies Phe71–Phe242.

It belongs to the oxygen-dependent FAD-linked oxidoreductase family. Requires FAD as cofactor.

It participates in secondary metabolite biosynthesis. Functionally, FAD-linked oxidoreductase; part of the gene cluster that mediates the biosynthesis of pyranonigrins, a family of antioxidative compounds. The first step of pyranonigrins biosynthesis is performed by the hybrid PKS-NRPS synthetase that condenses 6 malonyl-CoA units to an acetyl starter unit, to form a 1,3,5-trioxotetradecane-6,8-dienyl-ACP. The enoyl reductase (ER) domain of pynA is likely to be functional during the first two rounds of polyketide chain extension, to generate the saturated C-C bonds of the alkyl side chain. PynA subsequently forms the amide bond between the acyl chain and L-serine. Although pynA has a terminal reductase domain, it appears to require the thioesterase pynI for the release of the straight-chain intermediate from pynA via the formation of a tetramic acid pyranonigrin J. The methyltransferase pynC then coverts pyranonigrin J to pyranonigrin I via N-methylation. The FAD-dependent monooxygenase pynG catalyzes an epoxidation-mediated cyclization to form the dihydro-gamma-pyrone moiety, followed by pynD-catalyzed oxidation of the alcohol to the ketone and enolization to yield the characteristic tetramic acid-fused gamma-pyrone core of pyranonigrin H. Pyranonigrin H is substrate of pynH for dehydration-mediated exo-methylene formation from the serine side chain to produce pyranonigrin E, before the oxidase pynE reduces the exo-methylene of pyranonigrin E into a pendant methyl to form pyranonigrin G. The FAD-linked oxidoreductase pynB performs the reverse reaction and converts pyranonigrin G back to pyranonigrin E. This is FAD-linked oxidoreductase pynB from Aspergillus niger (strain ATCC MYA-4892 / CBS 513.88 / FGSC A1513).